Consider the following 247-residue polypeptide: MSNSKIYFEDRSIVTPGDLIAEGDFQIPWSPYYYKIGNKYYSSITGLIEVKENLFEIVPLEGHRYIPKVGDTVIGLIEDVEIYGWVLDIKSPYSAYLPASSFLGRPVSPGEDLRRYLNLGDYVIAKIETYDRTINPILSIKGKGLGRVSSGIVIDIPPVKVPRVIGKNRSMLDTLTSETGCEILVAQNGRILANCATKMIEEALVEAIQIIEKESHIKGLTEKIRKFLREKLGETKNDSATKTEANT.

The S1 motif domain maps to 70–143; sequence GDTVIGLIED…INPILSIKGK (74 aa). Residues 149–211 form the KH domain; the sequence is SSGIVIDIPP…EALVEAIQII (63 aa).

Belongs to the RRP4 family. As to quaternary structure, component of the archaeal exosome complex. Forms a trimer of Rrp4 and/or Csl4 subunits. The trimer associates with a hexameric ring-like arrangement composed of 3 Rrp41-Rrp42 heterodimers.

It localises to the cytoplasm. Non-catalytic component of the exosome, which is a complex involved in RNA degradation. Increases the RNA binding and the efficiency of RNA degradation. Confers strong poly(A) specificity to the exosome. In Sulfurisphaera tokodaii (strain DSM 16993 / JCM 10545 / NBRC 100140 / 7) (Sulfolobus tokodaii), this protein is Exosome complex component Rrp4.